A 209-amino-acid chain; its full sequence is Ribonuclease HII (209 aa).

An RNase H type-2 domain is found at Gln-20 to Ile-209. A divalent metal cation contacts are provided by Asp-26, Glu-27, and Asp-122.

The protein belongs to the RNase HII family. Mn(2+) serves as cofactor. Requires Mg(2+) as cofactor.

The protein resides in the cytoplasm. The enzyme catalyses Endonucleolytic cleavage to 5'-phosphomonoester.. Functionally, endonuclease that specifically degrades the RNA of RNA-DNA hybrids. In Prochlorococcus marinus (strain MIT 9515), this protein is Ribonuclease HII.